The chain runs to 338 residues: Malate dehydrogenase, mitochondrial (338 aa).

Residues M1–N24 constitute a mitochondrion transit peptide. Residues G31–G37 and D57 each bind NAD(+). An O-linked (GlcNAc) serine glycan is attached at S33. N6-acetyllysine; alternate occurs at positions 78 and 91. 2 positions are modified to N6-succinyllysine; alternate: K78 and K91. Positions 104 and 110 each coordinate substrate. NAD(+)-binding positions include N117 and I140–N142. Residue N142 participates in substrate binding. An N6-acetyllysine modification is found at K165. Residue R176 participates in substrate binding. Position 185 is an N6-acetyllysine; alternate (K185). The residue at position 185 (K185) is an N6-succinyllysine; alternate. Residue H200 is the Proton acceptor of the active site. K203 bears the N6-succinyllysine mark. Residues K215 and K239 each carry the N6-acetyllysine; alternate modification. 2 positions are modified to N6-succinyllysine; alternate: K215 and K239. K239 carries the post-translational modification N6-malonyllysine; alternate. Residue S246 is modified to Phosphoserine. Residue M251 participates in NAD(+) binding. N6-succinyllysine is present on K269. An N6-acetyllysine; alternate mark is found at K296, K301, K307, K314, and K324. An N6-succinyllysine; alternate mark is found at K296, K301, K307, K314, and K324. An N6-malonyllysine; alternate modification is found at K307. Phosphoserine is present on S326. Residues K328, K329, and K335 each carry the N6-acetyllysine; alternate modification. K328 carries the post-translational modification N6-succinyllysine; alternate. N6-malonyllysine; alternate is present on K329. K335 bears the N6-succinyllysine; alternate mark.

The protein belongs to the LDH/MDH superfamily. MDH type 1 family. In terms of assembly, homodimer. In terms of processing, acetylation is enhanced after treatment either with trichostin A (TCA) or with nicotinamide (NAM) with the appearance of tri- and tetraacetylations. Glucose also increases acetylation.

It is found in the mitochondrion matrix. It catalyses the reaction (S)-malate + NAD(+) = oxaloacetate + NADH + H(+). Its activity is regulated as follows. Enzyme activity is enhanced by acetylation. The polypeptide is Malate dehydrogenase, mitochondrial (MDH2) (Pongo abelii (Sumatran orangutan)).